We begin with the raw amino-acid sequence, 403 residues long: MAVKKLADLLKEGVEGRHVLVRADLNVPLKDKVITDPGRIDASLPTIKALTEAGARVIVAAHLGRPKSPQDTQFSLAPVAEALSQRLDQYVALASDVSGEDAHERANGLNDGDVLLLENVRFDPREKSKNDAEREELASELAALTGDNGAFVSDGFGVVHRKQASVYDVAKKLPAYVGYLVEKELEQLSKCTDDPQHPYAVCLGGSKVSDKLGVIKALAPKVDTLIIGGGMCYTFLKAKGYGVGDSLLEESMIDECKNLLSEYSDKIVLPSDIVVGKEFDANTEHKTVSADGIEDGWMGLDTGAESIKTFGERLNGAKTIFWNGPVGVFEFEAFANGTKGLAEAIAEATKNGAFSVIGGGDSASAVRNLGFADEAFSHISTGGGASLELIEGKTLPGVAVLDR.

Residues 24-26, Arg-39, 62-65, Arg-121, and Arg-161 each bind substrate; these read DLN and HLGR. ATP contacts are provided by residues Lys-211, Gly-299, Glu-330, and 359–362; that span reads GGDS.

The protein belongs to the phosphoglycerate kinase family. As to quaternary structure, monomer.

The protein localises to the cytoplasm. The catalysed reaction is (2R)-3-phosphoglycerate + ATP = (2R)-3-phospho-glyceroyl phosphate + ADP. Its pathway is carbohydrate degradation; glycolysis; pyruvate from D-glyceraldehyde 3-phosphate: step 2/5. This Corynebacterium kroppenstedtii (strain DSM 44385 / JCM 11950 / CIP 105744 / CCUG 35717) protein is Phosphoglycerate kinase.